An 836-amino-acid chain; its full sequence is CUB domain-containing protein 1 (836 aa).

An N-terminal signal peptide occupies residues 1–29 (MAGLNCGVSIALLGVLLLGAARLPRGAEA). The Extracellular portion of the chain corresponds to 30 to 667 (FEIALPRESN…TLTPRTVDLT (638 aa)). N-linked (GlcNAc...) asparagine glycosylation is found at Asn39, Asn122, Asn180, Asn205, Asn270, Asn310, and Asn386. The CUB domain maps to 417–544 (CTDHRYCQRK…VSFIPYFKEE (128 aa)). Cys476 and Cys499 are disulfide-bonded. The chain crosses the membrane as a helical span at residues 668–688 (VILIAAVGGGVLLLSALGLII). The Cytoplasmic segment spans residues 689–836 (CCVKKKKKKT…NTQEPMEPAE (148 aa)). At Tyr734 the chain carries Phosphotyrosine. Positions 776 to 836 (PPTICSRAPT…NTQEPMEPAE (61 aa)) are disordered.

As to quaternary structure, interacts with CDH2/N-cadherin, CDH3/P-cadherin, SDC1/syndecan-1, SDC4/syndecan-4 and the serine protease ST14/MT-SP1. Also interacts with SRC and PRKCG/protein kinase C gamma. Phosphorylated on tyrosine by kinases of the SRC family such as SRC and YES as well as by the protein kinase C gamma/PRKCG. Dephosphorylated by phosphotyrosine phosphatases. Also phosphorylated by suramin, a heparin analog. Tyrosine phosphorylated in response to dissociation of integrin alpha-6 beta-4 from laminin-5. In terms of processing, N-glycosylated. Post-translationally, a soluble form may also be produced by proteolytic cleavage at the cell surface (shedding). Another peptide of 80 kDa (p80) is present in cultured keratinocytes probably due to tryptic cleavage at an unidentified site on its N-terminal side. Converted to p80 by plasmin, a trypsin-like protease. Highly expressed in mitotic cells with low expression during interphase. Detected at highest levels in skeletal muscle and colon with lower levels in kidney, small intestine, placenta and lung. Up-regulated in a number of human tumor cell lines, as well as in colorectal cancer, breast carcinoma and lung cancer. Also expressed in cells with phenotypes reminiscent of mesenchymal stem cells and neural stem cells.

Its subcellular location is the cell membrane. It localises to the secreted. Functionally, may be involved in cell adhesion and cell matrix association. May play a role in the regulation of anchorage versus migration or proliferation versus differentiation via its phosphorylation. May be a novel marker for leukemia diagnosis and for immature hematopoietic stem cell subsets. Belongs to the tetraspanin web involved in tumor progression and metastasis. This chain is CUB domain-containing protein 1 (CDCP1), found in Homo sapiens (Human).